The following is a 147-amino-acid chain: D-aminoacyl-tRNA deacylase (147 aa).

The short motif at 136 to 137 is the Gly-cisPro motif, important for rejection of L-amino acids element; the sequence is GP.

It belongs to the DTD family. Homodimer.

Its subcellular location is the cytoplasm. It carries out the reaction glycyl-tRNA(Ala) + H2O = tRNA(Ala) + glycine + H(+). The enzyme catalyses a D-aminoacyl-tRNA + H2O = a tRNA + a D-alpha-amino acid + H(+). An aminoacyl-tRNA editing enzyme that deacylates mischarged D-aminoacyl-tRNAs. Also deacylates mischarged glycyl-tRNA(Ala), protecting cells against glycine mischarging by AlaRS. Acts via tRNA-based rather than protein-based catalysis; rejects L-amino acids rather than detecting D-amino acids in the active site. By recycling D-aminoacyl-tRNA to D-amino acids and free tRNA molecules, this enzyme counteracts the toxicity associated with the formation of D-aminoacyl-tRNA entities in vivo and helps enforce protein L-homochirality. This is D-aminoacyl-tRNA deacylase from Streptococcus pneumoniae serotype 2 (strain D39 / NCTC 7466).